A 303-amino-acid polypeptide reads, in one-letter code: Protease HtpX (303 aa).

Helical transmembrane passes span 4–24 and 42–62; these read IGLF…VFGI and IASL…ISLF. H149 contacts Zn(2+). The active site involves E150. H153 serves as a coordination point for Zn(2+). 2 helical membrane passes run 157-177 and 200-220; these read GDMV…MFFA and FVTS…IVMW. E226 is a Zn(2+) binding site.

Belongs to the peptidase M48B family. Zn(2+) serves as cofactor.

It localises to the cell inner membrane. This is Protease HtpX from Psychrobacter sp. (strain PRwf-1).